The sequence spans 393 residues: uncharacterized protein (393 aa).

Residues cysteine 72, cysteine 82, cysteine 85, and cysteine 160 each coordinate [4Fe-4S] cluster. S-adenosyl-L-methionine is bound by residues glutamine 215, phenylalanine 245, glutamate 267, and aspartate 313. Cysteine 340 acts as the Nucleophile in catalysis.

The protein belongs to the class I-like SAM-binding methyltransferase superfamily. RNA M5U methyltransferase family.

This is an uncharacterized protein from Nitrosomonas europaea (strain ATCC 19718 / CIP 103999 / KCTC 2705 / NBRC 14298).